Reading from the N-terminus, the 905-residue chain is MVSFGGIARKLFGSSNDRRVRSFQPNVAAINSIEEKTKALTDEQLAAKTVEFRALLAEGKTLDDILIPAFAVVREASRRVLGLRPFDVQLVGGMILHSNAIAEMKTGEGKTLVATLPVYLNALSGKGVHVVTVNDYLAQRDAATMGRVYSFLGMTTGVIVHGLSDEERHAAYACDITYATNNELGFDYLRDNMKYEKNQMVQRGHNFAIVDEVDSILVDEARTPLIISGPLDDRSELYNTIDAFIPLLVPSDYEIDEKQRSANFSEEGTEKLENLLRQAGLLKGNALYDIENVAIVHHVNNALKAHKLFQRDKDYIVRNDEVVIIDEFTGRMMPGRRYSEGQHQALEAKERVQIQPENQTLASITFQNYFRMYAKLAGMTGTAQTEAEEFANIYNLDVIEVPTNLPIKRIDEDDEVYRTFDEKFKAIIEEILDAHKRGQPVLVGTTSIEKSELLAERLRKQGFDDFQVLNARYHEQEAYIVAQAGVPGAITIATNMAGRGTDIQLGGNLDMRIERELGEVEAGPEREARIQAIVEEIKELKQKALAAGGLYVIATERHESRRIDNQLRGRSGRQGDPGRSKFYLSLQDDLMRIFGSDRMDSMLTKLGLKEGEAIVHPWINKALERAQKKVEARNFDIRKNLLKYDDVLNDQRKVIFEQRLELMESTNISETVSDMRREVIEDLVDKHIPERAYAEQWDAAGLKTGALNILNLDLPIEDWVKEEGIGEDDIRERLTQATNAAFTEKAERFGDDIMHYVERSIVMQTLDHLWREHIVNLDHLRSVIGFRGYAQRDPLQEYKSEAFELFTSLLNNLREAVTAQLMRVELVQQAPAEPEPPLMQAHHLDPTTGEDDFAPAIYQASEVIVSPENRNPDDPATWGKVGRNETCPCGSGKKYKHCHGAFEQV.

ATP contacts are provided by residues Q89, 107-111, and D502; that span reads GEGKT. Zn(2+) contacts are provided by C887, C889, C898, and H899.

The protein belongs to the SecA family. In terms of assembly, monomer and homodimer. Part of the essential Sec protein translocation apparatus which comprises SecA, SecYEG and auxiliary proteins SecDF-YajC and YidC. Zn(2+) is required as a cofactor.

The protein localises to the cell inner membrane. It localises to the cytoplasm. The catalysed reaction is ATP + H2O + cellular proteinSide 1 = ADP + phosphate + cellular proteinSide 2.. Part of the Sec protein translocase complex. Interacts with the SecYEG preprotein conducting channel. Has a central role in coupling the hydrolysis of ATP to the transfer of proteins into and across the cell membrane, serving both as a receptor for the preprotein-SecB complex and as an ATP-driven molecular motor driving the stepwise translocation of polypeptide chains across the membrane. This chain is Protein translocase subunit SecA, found in Rhizobium leguminosarum bv. trifolii (strain WSM2304).